We begin with the raw amino-acid sequence, 162 residues long: MGIASAVNSLLLKEFAAAFVVTMRYFFKPKPTVNYPFEKNPISPRFRGEHALRRYPNGEERCIACKLCEAICPAQAITIEAGPRRNDGTRRTVRYDIDMVKCIYCGLCQEACPVDAIVEGPNFEFATETREELYYDKARLLANGDRWEREIARNIEQDAPYR.

4Fe-4S ferredoxin-type domains lie at 52 to 82 (LRRYPNGEERCIACKLCEAICPAQAITIEAG) and 93 to 122 (VRYDIDMVKCIYCGLCQEACPVDAIVEGPN). [4Fe-4S] cluster-binding residues include Cys-62, Cys-65, Cys-68, Cys-72, Cys-102, Cys-105, Cys-108, and Cys-112.

The protein belongs to the complex I 23 kDa subunit family. In terms of assembly, NDH-1 is composed of 14 different subunits. Subunits NuoA, H, J, K, L, M, N constitute the membrane sector of the complex. It depends on [4Fe-4S] cluster as a cofactor.

The protein resides in the cell inner membrane. It catalyses the reaction a quinone + NADH + 5 H(+)(in) = a quinol + NAD(+) + 4 H(+)(out). NDH-1 shuttles electrons from NADH, via FMN and iron-sulfur (Fe-S) centers, to quinones in the respiratory chain. The immediate electron acceptor for the enzyme in this species is believed to be ubiquinone. Couples the redox reaction to proton translocation (for every two electrons transferred, four hydrogen ions are translocated across the cytoplasmic membrane), and thus conserves the redox energy in a proton gradient. The polypeptide is NADH-quinone oxidoreductase subunit I (Afipia carboxidovorans (strain ATCC 49405 / DSM 1227 / KCTC 32145 / OM5) (Oligotropha carboxidovorans)).